Consider the following 71-residue polypeptide: Exodeoxyribonuclease 7 small subunit (71 aa).

This sequence belongs to the XseB family. In terms of assembly, heterooligomer composed of large and small subunits.

It is found in the cytoplasm. It carries out the reaction Exonucleolytic cleavage in either 5'- to 3'- or 3'- to 5'-direction to yield nucleoside 5'-phosphates.. In terms of biological role, bidirectionally degrades single-stranded DNA into large acid-insoluble oligonucleotides, which are then degraded further into small acid-soluble oligonucleotides. The polypeptide is Exodeoxyribonuclease 7 small subunit (Streptococcus agalactiae serotype Ia (strain ATCC 27591 / A909 / CDC SS700)).